Here is a 483-residue protein sequence, read N- to C-terminus: SWI/SNF-related matrix-associated actin-dependent regulator of chromatin subfamily D member 3 (483 aa).

Ala-2 is modified (N-acetylalanine). The interval 26–102 (VRPGMPSGAR…ARSRSAKRRK (77 aa)) is disordered. Over residues 78 to 87 (QSQAQSQGQP) the composition is skewed to low complexity. Phosphoserine is present on Ser-178. Residues 258 to 335 (YQPPQFKLDP…PQRLTALLLP (78 aa)) form the SWIB/MDM2 domain.

The protein belongs to the SMARCD family. In terms of assembly, component of the multiprotein chromatin-remodeling complexes SWI/SNF: SWI/SNF-A (BAF), SWI/SNF-B (PBAF) and related complexes. The canonical complex contains a catalytic subunit (either SMARCA4/BRG1/BAF190A or SMARCA2/BRM/BAF190B) and at least SMARCE1, ACTL6A/BAF53, SMARCC1/BAF155, SMARCC2/BAF170, and SMARCB1/SNF5/BAF47. Other subunits specific to each of the complexes may also be present permitting several possible combinations developmentally and tissue specific. Component of the BAF complex, which includes at least actin (ACTB), ARID1A/BAF250A, ARID1B/BAF250B, SMARCA2/BRM, SMARCA4/BRG1/BAF190A, ACTL6A/BAF53, ACTL6B/BAF53B, SMARCE1/BAF57, SMARCC1/BAF155, SMARCC2/BAF170, SMARCB1/SNF5/INI1, and one or more SMARCD1/BAF60A, SMARCD2/BAF60B, or SMARCD3/BAF60C. In muscle cells, the BAF complex also contains DPF3. Component of neural progenitors-specific chromatin remodeling complex (npBAF complex) composed of at least, ARID1A/BAF250A or ARID1B/BAF250B, SMARCD1/BAF60A, SMARCD3/BAF60C, SMARCA2/BRM/BAF190B, SMARCA4/BRG1/BAF190A, SMARCB1/BAF47, SMARCC1/BAF155, SMARCE1/BAF57, SMARCC2/BAF170, PHF10/BAF45A, ACTL6A/BAF53A and actin. Component of neuron-specific chromatin remodeling complex (nBAF complex) composed of at least, ARID1A/BAF250A or ARID1B/BAF250B, SMARCD1/BAF60A, SMARCD3/BAF60C, SMARCA2/BRM/BAF190B, SMARCA4/BRG1/BAF190A, SMARCB1/BAF47, SMARCC1/BAF155, SMARCE1/BAF57, SMARCC2/BAF170, DPF1/BAF45B, DPF3/BAF45C, ACTL6B/BAF53B and actin. May be a component of the SWI/SNF-B (PBAF) chromatin remodeling complex, at least composed of SMARCA4/BRG1, SMARCB1/BAF47/SNF5, ACTL6A/BAF53A or ACTL6B/BAF53B, SMARCE1/BAF57, SMARCD1/BAF60A, SMARCD2/BAF60B, perhaps SMARCD3/BAF60C, SMARCC1/BAF155, SMARCC2/BAF170, PBRM1/BAF180, ARID2/BAF200 and actin. Interacts with SMARCA4/BRG1/BAF190A. Component of SWI/SNF (GBAF) subcomplex, which includes at least BICRA or BICRAL (mutually exclusive), BRD9, SS18, SMARCA2/BRM, SMARCA4/BRG1/BAF190A, ACTL6A/BAF53, SMARCC1/BAF155, and SMARCD1/BAF60A. The precise distribution of the related SMARCD1, SMARCD2 and SMARCD3 proteins among these and other SWI/SNF nucleosome-remodeling complexes is not fully known. May allow recruitment of SWI/SNF containing complexes specifically to promoters where these factors are located. Also interacts with several nuclear receptors including PPARG/NR1C3, RXRA/NR1F1, ESR1, NR5A1, NR5A2/LRH1 and other transcriptional activators including the HLH protein SREBF1/SREBP1 and the homeobox protein PBX1. Interacts with PRDM1/BLIMP1. In terms of tissue distribution, isoform 2 and isoform 1 are expressed in brain, heart, kidney, placenta, prostate, salivary gland, spleen, testis, thyroid, trachea and uterus. Isoform 1 is also expressed in skeletal muscle and adipose tissue.

It is found in the nucleus. Its function is as follows. Involved in transcriptional activation and repression of select genes by chromatin remodeling (alteration of DNA-nucleosome topology). Component of SWI/SNF chromatin remodeling complexes that carry out key enzymatic activities, changing chromatin structure by altering DNA-histone contacts within a nucleosome in an ATP-dependent manner. Stimulates nuclear receptor mediated transcription. Belongs to the neural progenitors-specific chromatin remodeling complex (npBAF complex) and the neuron-specific chromatin remodeling complex (nBAF complex). During neural development a switch from a stem/progenitor to a postmitotic chromatin remodeling mechanism occurs as neurons exit the cell cycle and become committed to their adult state. The transition from proliferating neural stem/progenitor cells to postmitotic neurons requires a switch in subunit composition of the npBAF and nBAF complexes. As neural progenitors exit mitosis and differentiate into neurons, npBAF complexes which contain ACTL6A/BAF53A and PHF10/BAF45A, are exchanged for homologous alternative ACTL6B/BAF53B and DPF1/BAF45B or DPF3/BAF45C subunits in neuron-specific complexes (nBAF). The npBAF complex is essential for the self-renewal/proliferative capacity of the multipotent neural stem cells. The nBAF complex along with CREST plays a role regulating the activity of genes essential for dendrite growth. The sequence is that of SWI/SNF-related matrix-associated actin-dependent regulator of chromatin subfamily D member 3 (SMARCD3) from Homo sapiens (Human).